A 118-amino-acid polypeptide reads, in one-letter code: Large ribosomal subunit protein bL20 (118 aa).

It belongs to the bacterial ribosomal protein bL20 family.

Functionally, binds directly to 23S ribosomal RNA and is necessary for the in vitro assembly process of the 50S ribosomal subunit. It is not involved in the protein synthesizing functions of that subunit. The protein is Large ribosomal subunit protein bL20 of Hydrogenovibrio crunogenus (strain DSM 25203 / XCL-2) (Thiomicrospira crunogena).